A 454-amino-acid polypeptide reads, in one-letter code: Bifunctional protein GlmU (454 aa).

The tract at residues 1 to 233 is pyrophosphorylase; that stretch reads MTNRTCLAVI…RESAVGINNR (233 aa). UDP-N-acetyl-alpha-D-glucosamine is bound by residues 11–14, K25, Q79, and 84–85; these read LAAG and GT. D109 contacts Mg(2+). The UDP-N-acetyl-alpha-D-glucosamine site is built by G145, E159, N174, and N231. N231 lines the Mg(2+) pocket. The segment at 234–254 is linker; that stretch reads AELAEAEAVWQQKRRRELMLS. Positions 255–454 are N-acetyltransferase; sequence GVTLIAPETV…AEEKAKKSGG (200 aa). 2 residues coordinate UDP-N-acetyl-alpha-D-glucosamine: R320 and K338. H350 acts as the Proton acceptor in catalysis. Positions 353 and 364 each coordinate UDP-N-acetyl-alpha-D-glucosamine. Acetyl-CoA-binding positions include A367, 373 to 374, S410, and R427; that span reads NY.

The protein in the N-terminal section; belongs to the N-acetylglucosamine-1-phosphate uridyltransferase family. In the C-terminal section; belongs to the transferase hexapeptide repeat family. Homotrimer. Mg(2+) serves as cofactor.

It localises to the cytoplasm. It catalyses the reaction alpha-D-glucosamine 1-phosphate + acetyl-CoA = N-acetyl-alpha-D-glucosamine 1-phosphate + CoA + H(+). The enzyme catalyses N-acetyl-alpha-D-glucosamine 1-phosphate + UTP + H(+) = UDP-N-acetyl-alpha-D-glucosamine + diphosphate. Its pathway is nucleotide-sugar biosynthesis; UDP-N-acetyl-alpha-D-glucosamine biosynthesis; N-acetyl-alpha-D-glucosamine 1-phosphate from alpha-D-glucosamine 6-phosphate (route II): step 2/2. It participates in nucleotide-sugar biosynthesis; UDP-N-acetyl-alpha-D-glucosamine biosynthesis; UDP-N-acetyl-alpha-D-glucosamine from N-acetyl-alpha-D-glucosamine 1-phosphate: step 1/1. The protein operates within bacterial outer membrane biogenesis; LPS lipid A biosynthesis. Catalyzes the last two sequential reactions in the de novo biosynthetic pathway for UDP-N-acetylglucosamine (UDP-GlcNAc). The C-terminal domain catalyzes the transfer of acetyl group from acetyl coenzyme A to glucosamine-1-phosphate (GlcN-1-P) to produce N-acetylglucosamine-1-phosphate (GlcNAc-1-P), which is converted into UDP-GlcNAc by the transfer of uridine 5-monophosphate (from uridine 5-triphosphate), a reaction catalyzed by the N-terminal domain. This chain is Bifunctional protein GlmU, found in Chelativorans sp. (strain BNC1).